Reading from the N-terminus, the 90-residue chain is Probable Fe(2+)-trafficking protein (90 aa).

Belongs to the Fe(2+)-trafficking protein family.

Its function is as follows. Could be a mediator in iron transactions between iron acquisition and iron-requiring processes, such as synthesis and/or repair of Fe-S clusters in biosynthetic enzymes. The polypeptide is Probable Fe(2+)-trafficking protein (Pseudomonas aeruginosa (strain UCBPP-PA14)).